Here is a 77-residue protein sequence, read N- to C-terminus: Conotoxin Cl6.15 (77 aa).

Positions 1–19 (MKLSVKFLLFLMILPLIAG) are cleaved as a signal peptide. Positions 20–37 (EDMSDNDAPKSVDVQRNV) are excised as a propeptide. 3 disulfide bridges follow: Cys49-Cys61, Cys55-Cys66, and Cys60-Cys75.

Belongs to the conotoxin I1 superfamily. In terms of tissue distribution, expressed by the venom duct.

It is found in the secreted. The sequence is that of Conotoxin Cl6.15 from Californiconus californicus (California cone).